Consider the following 73-residue polypeptide: Translation initiation factor IF-1 (73 aa).

Residues 1 to 73 (MPKKDGAIEI…SRGRIVYRYK (73 aa)) form the S1-like domain.

Belongs to the IF-1 family. As to quaternary structure, component of the 30S ribosomal translation pre-initiation complex which assembles on the 30S ribosome in the order IF-2 and IF-3, IF-1 and N-formylmethionyl-tRNA(fMet); mRNA recruitment can occur at any time during PIC assembly.

The protein resides in the cytoplasm. In terms of biological role, one of the essential components for the initiation of protein synthesis. Stabilizes the binding of IF-2 and IF-3 on the 30S subunit to which N-formylmethionyl-tRNA(fMet) subsequently binds. Helps modulate mRNA selection, yielding the 30S pre-initiation complex (PIC). Upon addition of the 50S ribosomal subunit IF-1, IF-2 and IF-3 are released leaving the mature 70S translation initiation complex. In Frankia alni (strain DSM 45986 / CECT 9034 / ACN14a), this protein is Translation initiation factor IF-1.